A 59-amino-acid polypeptide reads, in one-letter code: Conotoxin reg3.15 (59 aa).

Residues 1-15 form the signal peptide; it reads RVLLTICLLLFPLTA. Residues 16–44 constitute a propeptide that is removed on maturation; sequence IPLGGDQPAERMRNVRSAVQDPRFDSVGW. Intrachain disulfides connect Cys45–Cys59, Cys46–Cys55, and Cys51–Cys58.

This sequence belongs to the conotoxin M superfamily. Expressed by the venom duct.

Its subcellular location is the secreted. The polypeptide is Conotoxin reg3.15 (Conus regius (Crown cone)).